The chain runs to 938 residues: Translation initiation factor IF-2 (938 aa).

Residues 57–205 (DKSKKVASKE…PKSEETKSEE (149 aa)) are compositionally biased toward basic and acidic residues. Residues 57–350 (DKSKKVASKE…RSADDLAQQE (294 aa)) are disordered. Residues 206-215 (TTEGGESEEK) show a composition bias toward acidic residues. Positions 248–259 (KKEEKKEDDKKD) are enriched in basic and acidic residues. Basic residues-rich tracts occupy residues 260 to 270 (KDRRKKRRRRI) and 285 to 296 (GAKKGGRTRSKP). Basic and acidic residues predominate over residues 297–319 (ITKEEPTEEEVQKQVRETLEKLQ). A compositionally biased stretch (basic residues) spans 323-333 (SKGKGAKYRRQ). Positions 334–344 (KRDEHRQRSAD) are enriched in basic and acidic residues. Residues 434-602 (TRAPIVTVMG…KVLLEAEILE (169 aa)) enclose the tr-type G domain. Residues 443–450 (GHVDHGKT) are G1. Residue 443–450 (GHVDHGKT) participates in GTP binding. Residues 468–472 (GITQH) are G2. The tract at residues 490–493 (DTPG) is G3. Residues 490–494 (DTPGH) and 544–547 (NKSD) contribute to the GTP site. The segment at 544–547 (NKSD) is G4. The G5 stretch occupies residues 580–582 (SAK).

The protein belongs to the TRAFAC class translation factor GTPase superfamily. Classic translation factor GTPase family. IF-2 subfamily.

It localises to the cytoplasm. Functionally, one of the essential components for the initiation of protein synthesis. Protects formylmethionyl-tRNA from spontaneous hydrolysis and promotes its binding to the 30S ribosomal subunits. Also involved in the hydrolysis of GTP during the formation of the 70S ribosomal complex. The polypeptide is Translation initiation factor IF-2 (Christiangramia forsetii (strain DSM 17595 / CGMCC 1.15422 / KT0803) (Gramella forsetii)).